The sequence spans 839 residues: LPS-assembly protein LptD (839 aa).

An N-terminal signal peptide occupies residues 1–21 (MAIGITACVLSLINYQGLAYS).

Belongs to the LptD family. As to quaternary structure, component of the lipopolysaccharide transport and assembly complex. Interacts with LptE and LptA.

The protein resides in the cell outer membrane. In terms of biological role, together with LptE, is involved in the assembly of lipopolysaccharide (LPS) at the surface of the outer membrane. The chain is LPS-assembly protein LptD from Legionella pneumophila (strain Lens).